The following is a 110-amino-acid chain: Ribonuclease P protein component 1 (110 aa).

Belongs to the eukaryotic/archaeal RNase P protein component 1 family. As to quaternary structure, consists of a catalytic RNA component and at least 4-5 protein subunits.

The protein resides in the cytoplasm. The enzyme catalyses Endonucleolytic cleavage of RNA, removing 5'-extranucleotides from tRNA precursor.. In terms of biological role, part of ribonuclease P, a protein complex that generates mature tRNA molecules by cleaving their 5'-ends. The sequence is that of Ribonuclease P protein component 1 from Aeropyrum pernix (strain ATCC 700893 / DSM 11879 / JCM 9820 / NBRC 100138 / K1).